Reading from the N-terminus, the 560-residue chain is Alpha-keto-acid decarboxylase (560 aa).

Glu-61 lines the thiamine diphosphate pocket. Residues 396–478 (TSFYGMADHR…VVVNNDGYTV (83 aa)) are thiamine pyrophosphate binding. Mg(2+) contacts are provided by Asp-446, Asn-473, and Gly-475.

This sequence belongs to the TPP enzyme family. It depends on a metal cation as a cofactor. Requires thiamine diphosphate as cofactor.

Its function is as follows. Decarboxylates branched-chain and aromatic alpha-keto acids to aldehydes. The sequence is that of Alpha-keto-acid decarboxylase (kdc) from Mycobacterium tuberculosis (strain CDC 1551 / Oshkosh).